Here is a 133-residue protein sequence, read N- to C-terminus: MTYEILDHESDIGIMVYGTTYEELFSNAVYAMADLILDVGKLKEKRKMHEIIRGNTPEDIMVNLLSRVLFYVDTYYTLYFRATCKYEDSTLDVYLYGSEIPEEVEYRNVIKAVTYSEIAVKPEDGFARVIFDL.

3 residues coordinate Ca(2+): Asp11, Asp132, and Leu133.

The protein belongs to the archease family.

Its function is as follows. Activates the tRNA-splicing ligase complex by facilitating the enzymatic turnover of catalytic subunit RtcB. Acts by promoting the guanylylation of RtcB, a key intermediate step in tRNA ligation. Can also alter the NTP specificity of RtcB such that ATP, dGTP or ITP is used efficiently. The protein is Protein archease of Thermoplasma volcanium (strain ATCC 51530 / DSM 4299 / JCM 9571 / NBRC 15438 / GSS1).